Reading from the N-terminus, the 99-residue chain is Integration host factor subunit alpha (99 aa).

Positions 49-71 are disordered; sequence FGNFDLRDKNQRPGRNPKTGEDI.

The protein belongs to the bacterial histone-like protein family. As to quaternary structure, heterodimer of an alpha and a beta chain.

Functionally, this protein is one of the two subunits of integration host factor, a specific DNA-binding protein that functions in genetic recombination as well as in transcriptional and translational control. This Shewanella frigidimarina (strain NCIMB 400) protein is Integration host factor subunit alpha.